The sequence spans 473 residues: Mediator of RNA polymerase II transcription subunit 29 (473 aa).

Polar residues predominate over residues 1–12 (MSGQGPPSNLTP). 2 disordered regions span residues 1–319 (MSGQ…NEEQ) and 444–473 (STME…EMAE). Residues 13 to 50 (QQQHMIMQQQQQQQMMRQQQIQQQQLHQRQLQQQQAQQ) are compositionally biased toward low complexity. Residues 51–62 (SYQRSRTPQMQQ) show a composition bias toward polar residues. Composition is skewed to low complexity over residues 111 to 123 (QMMQ…NQPM) and 130 to 139 (VSRPGSVAPP). Composition is skewed to polar residues over residues 148-183 (TGPS…QQSH) and 255-269 (PPGS…QPGS). Composition is skewed to low complexity over residues 272 to 286 (APGS…QPPA) and 294 to 308 (AASG…AAPA).

The protein belongs to the Mediator complex subunit 29 family. Component of the Mediator complex.

The protein localises to the nucleus. Its function is as follows. Component of the Mediator complex, a coactivator involved in the regulated transcription of nearly all RNA polymerase II-dependent genes. Mediator functions as a bridge to convey information from gene-specific regulatory proteins to the basal RNA polymerase II transcription machinery. Mediator is recruited to promoters by direct interactions with regulatory proteins and serves as a scaffold for the assembly of a functional preinitiation complex with RNA polymerase II and the general transcription factors. The chain is Mediator of RNA polymerase II transcription subunit 29 (mdt-29) from Caenorhabditis briggsae.